The sequence spans 339 residues: Centromere protein N (339 aa).

2 positions are modified to phosphoserine: serine 226 and serine 235.

This sequence belongs to the CENP-N/CHL4 family. Component of the CENPA-NAC complex, at least composed of CENPA, CENPC, CENPH, CENPM, CENPN, CENPT and CENPU. The CENPA-NAC complex interacts with the CENPA-CAD complex, composed of CENPI, CENPK, CENPL, CENPO, CENPP, CENPQ, CENPR and CENPS. Interacts directly with CENPA. Identified in a centromere complex containing histones H2A, H2B and H4, and at least CENPA, CENPB, CENPC, CENPT, CENPN, HJURP, SUPT16H, SSRP1 and RSF1.

The protein resides in the nucleus. Its subcellular location is the chromosome. It localises to the centromere. The protein localises to the kinetochore. Its function is as follows. Component of the CENPA-NAC (nucleosome-associated) complex, a complex that plays a central role in assembly of kinetochore proteins, mitotic progression and chromosome segregation. The CENPA-NAC complex recruits the CENPA-CAD (nucleosome distal) complex and may be involved in incorporation of newly synthesized CENPA into centromeres. CENPN is the first protein to bind specifically to CENPA nucleosomes and the direct binding of CENPA nucleosomes by CENPN is required for centromere assembly. Required for chromosome congression and efficiently align the chromosomes on a metaphase plate. The protein is Centromere protein N (CENPN) of Bos taurus (Bovine).